The following is a 61-amino-acid chain: Large ribosomal subunit protein bL28 (61 aa).

The protein belongs to the bacterial ribosomal protein bL28 family.

This Nocardioides sp. (strain ATCC BAA-499 / JS614) protein is Large ribosomal subunit protein bL28.